The primary structure comprises 325 residues: 5-dehydro-2-deoxygluconokinase (325 aa).

This sequence belongs to the carbohydrate kinase PfkB family.

The enzyme catalyses 5-dehydro-2-deoxy-D-gluconate + ATP = 6-phospho-5-dehydro-2-deoxy-D-gluconate + ADP + H(+). The protein operates within polyol metabolism; myo-inositol degradation into acetyl-CoA; acetyl-CoA from myo-inositol: step 5/7. Catalyzes the phosphorylation of 5-dehydro-2-deoxy-D-gluconate (2-deoxy-5-keto-D-gluconate or DKG) to 6-phospho-5-dehydro-2-deoxy-D-gluconate (DKGP). This is 5-dehydro-2-deoxygluconokinase from Listeria monocytogenes serotype 4b (strain CLIP80459).